A 459-amino-acid chain; its full sequence is DnaJ protein homolog XDJ1 (459 aa).

Residues 7-79 (GDRLYDVLGV…KSHYDLYGDD (73 aa)) enclose the J domain. The CR-type zinc finger occupies 146–240 (GKKLKFDLKR…CAGLGLLSKK (95 aa)). 4 CXXCXGXG motif repeats span residues 159–166 (CIKCHGSG), 181–188 (CESCAGKG), 208–215 (CEKCNGKG), and 228–235 (CPDCAGLG).

The protein localises to the mitochondrion outer membrane. This is DnaJ protein homolog XDJ1 (XDJ1) from Saccharomyces cerevisiae (strain ATCC 204508 / S288c) (Baker's yeast).